The chain runs to 572 residues: Proline--tRNA ligase (572 aa).

Belongs to the class-II aminoacyl-tRNA synthetase family. ProS type 1 subfamily. Homodimer.

The protein resides in the cytoplasm. The catalysed reaction is tRNA(Pro) + L-proline + ATP = L-prolyl-tRNA(Pro) + AMP + diphosphate. Its function is as follows. Catalyzes the attachment of proline to tRNA(Pro) in a two-step reaction: proline is first activated by ATP to form Pro-AMP and then transferred to the acceptor end of tRNA(Pro). As ProRS can inadvertently accommodate and process non-cognate amino acids such as alanine and cysteine, to avoid such errors it has two additional distinct editing activities against alanine. One activity is designated as 'pretransfer' editing and involves the tRNA(Pro)-independent hydrolysis of activated Ala-AMP. The other activity is designated 'posttransfer' editing and involves deacylation of mischarged Ala-tRNA(Pro). The misacylated Cys-tRNA(Pro) is not edited by ProRS. This is Proline--tRNA ligase from Edwardsiella ictaluri (strain 93-146).